The chain runs to 214 residues: Orotate phosphoribosyltransferase (214 aa).

Lys-26 is a 5-phospho-alpha-D-ribose 1-diphosphate binding site. Residue 34–35 coordinates orotate; sequence FF. 5-phospho-alpha-D-ribose 1-diphosphate-binding positions include 72–73, Arg-99, Lys-100, Lys-103, His-105, and 124–132; these read YK and DDVITAGTA. Orotate-binding residues include Thr-128 and Arg-156.

The protein belongs to the purine/pyrimidine phosphoribosyltransferase family. PyrE subfamily. As to quaternary structure, homodimer. It depends on Mg(2+) as a cofactor.

The catalysed reaction is orotidine 5'-phosphate + diphosphate = orotate + 5-phospho-alpha-D-ribose 1-diphosphate. It functions in the pathway pyrimidine metabolism; UMP biosynthesis via de novo pathway; UMP from orotate: step 1/2. Its function is as follows. Catalyzes the transfer of a ribosyl phosphate group from 5-phosphoribose 1-diphosphate to orotate, leading to the formation of orotidine monophosphate (OMP). This is Orotate phosphoribosyltransferase from Pseudoalteromonas translucida (strain TAC 125).